A 551-amino-acid polypeptide reads, in one-letter code: uncharacterized protein (551 aa).

The protein belongs to the GSP E family.

This is an uncharacterized protein from Methanocaldococcus jannaschii (strain ATCC 43067 / DSM 2661 / JAL-1 / JCM 10045 / NBRC 100440) (Methanococcus jannaschii).